Here is a 23-residue protein sequence, read N- to C-terminus: Gastrin-releasing peptide (23 aa).

At Met23 the chain carries Methionine amide.

The protein belongs to the bombesin/neuromedin-B/ranatensin family.

It is found in the secreted. The protein resides in the cytoplasmic vesicle. The protein localises to the secretory vesicle lumen. Its function is as follows. Stimulates the release of gastrin and other gastrointestinal hormones. This chain is Gastrin-releasing peptide (grp), found in Oncorhynchus mykiss (Rainbow trout).